A 233-amino-acid chain; its full sequence is Large ribosomal subunit protein uL1 (233 aa).

This sequence belongs to the universal ribosomal protein uL1 family. In terms of assembly, part of the 50S ribosomal subunit.

Functionally, binds directly to 23S rRNA. The L1 stalk is quite mobile in the ribosome, and is involved in E site tRNA release. Protein L1 is also a translational repressor protein, it controls the translation of the L11 operon by binding to its mRNA. The chain is Large ribosomal subunit protein uL1 from Buchnera aphidicola subsp. Baizongia pistaciae (strain Bp).